We begin with the raw amino-acid sequence, 847 residues long: Putative disease resistance RPP13-like protein 2 (847 aa).

Residues 26 to 42 (GVKDDLEELKTELTCIQ) are a coiled coil. An NB-ARC domain is found at 142-446 (STSRVREVRR…AEGFIQEDEE (305 aa)). 191 to 198 (GMEGLGKT) contributes to the ATP binding site. LRR repeat units follow at residues 587-610 (LVHL…ISNL), 612-634 (FLQT…NLTS), 703-726 (LKNL…TVRF), 749-774 (FPSL…KLQR), and 807-830 (IKRL…NLDN).

It belongs to the disease resistance NB-LRR family. RPP13 subfamily.

Functionally, potential disease resistance protein. The sequence is that of Putative disease resistance RPP13-like protein 2 (RPP13L2) from Arabidopsis thaliana (Mouse-ear cress).